The primary structure comprises 90 residues: UPF0297 protein lwe1516 (90 aa).

It belongs to the UPF0297 family.

The chain is UPF0297 protein lwe1516 from Listeria welshimeri serovar 6b (strain ATCC 35897 / DSM 20650 / CCUG 15529 / CIP 8149 / NCTC 11857 / SLCC 5334 / V8).